Here is a 446-residue protein sequence, read N- to C-terminus: UDP-N-acetylmuramoylalanine--D-glutamate ligase (446 aa).

An ATP-binding site is contributed by 115 to 121; that stretch reads GTNGKTT.

It belongs to the MurCDEF family.

The protein resides in the cytoplasm. It catalyses the reaction UDP-N-acetyl-alpha-D-muramoyl-L-alanine + D-glutamate + ATP = UDP-N-acetyl-alpha-D-muramoyl-L-alanyl-D-glutamate + ADP + phosphate + H(+). It functions in the pathway cell wall biogenesis; peptidoglycan biosynthesis. Functionally, cell wall formation. Catalyzes the addition of glutamate to the nucleotide precursor UDP-N-acetylmuramoyl-L-alanine (UMA). The protein is UDP-N-acetylmuramoylalanine--D-glutamate ligase of Pelobacter propionicus (strain DSM 2379 / NBRC 103807 / OttBd1).